We begin with the raw amino-acid sequence, 412 residues long: Peptidase T (412 aa).

H84 is a binding site for Zn(2+). The active site involves D86. D146 is a binding site for Zn(2+). E179 (proton acceptor) is an active-site residue. Residues E180, D202, and H385 each coordinate Zn(2+).

This sequence belongs to the peptidase M20B family. Requires Zn(2+) as cofactor.

The protein localises to the cytoplasm. It catalyses the reaction Release of the N-terminal residue from a tripeptide.. In terms of biological role, cleaves the N-terminal amino acid of tripeptides. The protein is Peptidase T of Haemophilus influenzae (strain PittEE).